The sequence spans 260 residues: Triosephosphate isomerase (260 aa).

11-13 (NWK) contributes to the substrate binding site. The active-site Electrophile is the His103. Glu175 functions as the Proton acceptor in the catalytic mechanism. Substrate is bound by residues Gly181, Ser220, and 241–242 (GG).

The protein belongs to the triosephosphate isomerase family. In terms of assembly, homodimer.

It is found in the cytoplasm. The enzyme catalyses D-glyceraldehyde 3-phosphate = dihydroxyacetone phosphate. It participates in carbohydrate biosynthesis; gluconeogenesis. The protein operates within carbohydrate degradation; glycolysis; D-glyceraldehyde 3-phosphate from glycerone phosphate: step 1/1. Its function is as follows. Involved in the gluconeogenesis. Catalyzes stereospecifically the conversion of dihydroxyacetone phosphate (DHAP) to D-glyceraldehyde-3-phosphate (G3P). The sequence is that of Triosephosphate isomerase from Shewanella sp. (strain MR-7).